A 132-amino-acid polypeptide reads, in one-letter code: Agouti-signaling protein (132 aa).

The N-terminal stretch at 1-22 (MDVTRLLLATLLVFLCFFTAYS) is a signal peptide. A glycan (N-linked (GlcNAc...) asparagine) is linked at N39. Residues 61–87 (QISRKEAEKKRSSKKEASMKKVARPRT) are disordered. The segment covering 63-79 (SRKEAEKKRSSKKEASM) has biased composition (basic and acidic residues). Disulfide bonds link C93/C108, C100/C114, C107/C125, C111/C132, and C116/C123. An Agouti domain is found at 93-132 (CVATRDSCKPPAPACCDPCAFCQCRFFRSACSCRVLSLNC).

It is found in the secreted. Functionally, involved in the regulation of melanogenesis. The binding of ASP to MC1R precludes alpha-MSH initiated signaling and thus blocks production of cAMP, leading to a down-regulation of eumelanogenesis (brown/black pigment) and thus increasing synthesis of pheomelanin (yellow/red pigment). The sequence is that of Agouti-signaling protein (ASIP) from Macaca hecki (Heck's macaque).